The sequence spans 230 residues: Protein-L-isoaspartate O-methyltransferase (230 aa).

S65 is an active-site residue.

This sequence belongs to the methyltransferase superfamily. L-isoaspartyl/D-aspartyl protein methyltransferase family. As to quaternary structure, monomer. As to expression, highest contents in seeds.

It localises to the cytoplasm. It catalyses the reaction [protein]-L-isoaspartate + S-adenosyl-L-methionine = [protein]-L-isoaspartate alpha-methyl ester + S-adenosyl-L-homocysteine. Catalyzes the methyl esterification of L-isoaspartyl residues in peptides and proteins that result from spontaneous decomposition of normal L-aspartyl and L-asparaginyl residues. It plays a role in the repair and/or degradation of damaged proteins. This enzyme does not act on D-aspartyl residues. This is Protein-L-isoaspartate O-methyltransferase (PCM) from Triticum aestivum (Wheat).